The primary structure comprises 126 residues: Fluoride-specific ion channel FluC (126 aa).

A run of 4 helical transmembrane segments spans residues Phe5–Ile25, Thr39–Val59, Ile69–Thr89, and Ala103–Val123. Na(+) contacts are provided by Gly77 and Thr80.

Belongs to the fluoride channel Fluc/FEX (TC 1.A.43) family.

It is found in the cell inner membrane. The enzyme catalyses fluoride(in) = fluoride(out). Its activity is regulated as follows. Na(+) is not transported, but it plays an essential structural role and its presence is essential for fluoride channel function. In terms of biological role, fluoride-specific ion channel. Important for reducing fluoride concentration in the cell, thus reducing its toxicity. This chain is Fluoride-specific ion channel FluC, found in Nitrobacter winogradskyi (strain ATCC 25391 / DSM 10237 / CIP 104748 / NCIMB 11846 / Nb-255).